A 121-amino-acid chain; its full sequence is Parathyroid hormone-related protein (121 aa).

The signal sequence occupies residues 1 to 14 (VGVFLLSYSVPSCG). A propeptide spanning residues 15–24 (RSVEELGRRL) is cleaved from the precursor. Positions 47 to 58 (RFFLHHLIAEIH) are important for receptor binding. The disordered stretch occupies residues 61 to 121 (EIRATSEVSP…PGKKKKGKPG (61 aa)). Polar residues predominate over residues 66–80 (SEVSPNSKPAPNTKN). The Nuclear localization signal motif lies at 98–119 (TNKVETYKEQPLKTPGKKKKGK). Basic and acidic residues predominate over residues 99 to 108 (NKVETYKEQP). Residues 112-121 (PGKKKKGKPG) show a composition bias toward basic residues.

Belongs to the parathyroid hormone family. As to quaternary structure, PTHrP interacts with PTH1R (via N-terminal extracellular domain).

The protein localises to the secreted. It is found in the cytoplasm. Its subcellular location is the nucleus. In terms of biological role, neuroendocrine peptide which is a critical regulator of cellular and organ growth, development, migration, differentiation and survival and of epithelial calcium ion transport. Acts by binding to its receptor, PTH1R, activating G protein-coupled receptor signaling. Regulates endochondral bone development and epithelial-mesenchymal interactions during the formation of the mammary glands and teeth. Required for skeletal homeostasis. Promotes mammary mesenchyme differentiation and bud outgrowth by modulating mesenchymal cell responsiveness to BMPs. Up-regulates BMPR1A expression in the mammary mesenchyme and this increases the sensitivity of these cells to BMPs and allows them to respond to BMP4 in a paracrine and/or autocrine fashion. BMP4 signaling in the mesenchyme, in turn, triggers epithelial outgrowth and augments MSX2 expression, which causes the mammary mesenchyme to inhibit hair follicle formation within the nipple sheath. This Ovis aries (Sheep) protein is Parathyroid hormone-related protein (PTHLH).